The chain runs to 316 residues: tRNA dimethylallyltransferase (316 aa).

Position 17-24 (17-24 (GPTASGKT)) interacts with ATP. Residue 19–24 (TASGKT) participates in substrate binding. Interaction with substrate tRNA stretches follow at residues 42–45 (DSAL), 166–170 (QRLSR), and 247–252 (RCVGYR).

It belongs to the IPP transferase family. In terms of assembly, monomer. The cofactor is Mg(2+).

It catalyses the reaction adenosine(37) in tRNA + dimethylallyl diphosphate = N(6)-dimethylallyladenosine(37) in tRNA + diphosphate. Its function is as follows. Catalyzes the transfer of a dimethylallyl group onto the adenine at position 37 in tRNAs that read codons beginning with uridine, leading to the formation of N6-(dimethylallyl)adenosine (i(6)A). This Salmonella schwarzengrund (strain CVM19633) protein is tRNA dimethylallyltransferase.